The following is a 427-amino-acid chain: Vitamin D3 receptor (427 aa).

The nuclear receptor DNA-binding region spans 21-96; that stretch reads PRICGVCGDR…IGMMKEFILT (76 aa). Zn(2+)-binding residues include Cys-24, Cys-27, Cys-41, Cys-44, Cys-60, Cys-66, Cys-76, and Cys-79. 2 NR C4-type zinc fingers span residues 24–44 and 60–79; these read CGVC…CEGC and CPFN…CQAC. The tract at residues 97-126 is hinge; it reads DEEVQRKREMILKRKEEEALKDSLRPKLSE. The 297-residue stretch at 127–423 folds into the NR LBD domain; the sequence is EQQRIIAILL…LTPLVLEVFG (297 aa). Tyr-143 contributes to the calcitriol binding site. Positions 149 to 201 are disordered; sequence DFGQFRPPVRGDEEEGTLPSRSSSAHAPSFSGSSSSSCSDQYTSSPDTMEPAS. Positions 168 to 193 are enriched in low complexity; that stretch reads SRSSSAHAPSFSGSSSSSCSDQYTSS. A calcitriol-binding site is contributed by Ser-237. Residues 246–264 form an interaction with coactivator LXXLL motif region; the sequence is KMIPGFRDLTAEDQIVLLK. Calcitriol contacts are provided by Arg-274, Ser-278, His-305, and His-397. Residues 416–424 carry the 9aaTAD motif; the sequence is PLVLEVFGN.

Belongs to the nuclear hormone receptor family. NR1 subfamily. In terms of assembly, homodimer in the absence of bound vitamin D3. Heterodimer with RXRA after vitamin D3 binding. Interacts with MED1, NCOA1, NCOA2, NCOA3 and NCOA6 coactivators, leading to a strong increase of transcription of target genes. Interacts with the corepressor NCOR1. Interacts with SNW1. Interacts with IRX4, the interaction does not affect its transactivation activity. Interacts with CRY1. Interacts with CRY2 in a ligand-dependent manner. Ubiquitinated by UBR5, leading to its degradation: UBR5 specifically recognizes and binds ligand-bound VDR when it is not associated with coactivators (NCOAs). In presence of NCOAs, the UBR5-degron is not accessible, preventing its ubiquitination and degradation.

The protein resides in the nucleus. It is found in the cytoplasm. Its function is as follows. Nuclear receptor for calcitriol, the active form of vitamin D3 which mediates the action of this vitamin on cells. Enters the nucleus upon vitamin D3 binding where it forms heterodimers with the retinoid X receptor/RXR. The VDR-RXR heterodimers bind to specific response elements on DNA and activate the transcription of vitamin D3-responsive target genes. Plays a central role in calcium homeostasis. Also functions as a receptor for the secondary bile acid lithocholic acid (LCA) and its metabolites. This chain is Vitamin D3 receptor (VDR), found in Sus scrofa (Pig).